A 110-amino-acid chain; its full sequence is Large ribosomal subunit protein uL22 (110 aa).

This sequence belongs to the universal ribosomal protein uL22 family. In terms of assembly, part of the 50S ribosomal subunit.

Functionally, this protein binds specifically to 23S rRNA; its binding is stimulated by other ribosomal proteins, e.g. L4, L17, and L20. It is important during the early stages of 50S assembly. It makes multiple contacts with different domains of the 23S rRNA in the assembled 50S subunit and ribosome. The globular domain of the protein is located near the polypeptide exit tunnel on the outside of the subunit, while an extended beta-hairpin is found that lines the wall of the exit tunnel in the center of the 70S ribosome. The sequence is that of Large ribosomal subunit protein uL22 from Leptospira interrogans serogroup Icterohaemorrhagiae serovar copenhageni (strain Fiocruz L1-130).